A 349-amino-acid polypeptide reads, in one-letter code: DNA polymerase IV (349 aa).

One can recognise a UmuC domain in the interval 3–187 (VLFVDFDYFF…LDISKVPGVG (185 aa)). D7 and D105 together coordinate Mg(2+). E106 is a catalytic residue.

This sequence belongs to the DNA polymerase type-Y family. As to quaternary structure, monomer. It depends on Mg(2+) as a cofactor.

Its subcellular location is the cytoplasm. The enzyme catalyses DNA(n) + a 2'-deoxyribonucleoside 5'-triphosphate = DNA(n+1) + diphosphate. Poorly processive, error-prone DNA polymerase involved in untargeted mutagenesis. Copies undamaged DNA at stalled replication forks, which arise in vivo from mismatched or misaligned primer ends. These misaligned primers can be extended by PolIV. Exhibits no 3'-5' exonuclease (proofreading) activity. May be involved in translesional synthesis. The protein is DNA polymerase IV of Metallosphaera sedula (strain ATCC 51363 / DSM 5348 / JCM 9185 / NBRC 15509 / TH2).